We begin with the raw amino-acid sequence, 149 residues long: Glutamyl-tRNA(Gln) amidotransferase subunit C, mitochondrial (149 aa).

Residues 1-25 constitute a mitochondrion transit peptide; that stretch reads MNHLHRLFRITQVDRPVLLAITRRL.

It belongs to the GatC family. Subunit of the heterotrimeric GatCAB amidotransferase (AdT) complex, composed of A, B and C subunits.

Its subcellular location is the mitochondrion. The enzyme catalyses L-glutamyl-tRNA(Gln) + L-glutamine + ATP + H2O = L-glutaminyl-tRNA(Gln) + L-glutamate + ADP + phosphate + H(+). Allows the formation of correctly charged Gln-tRNA(Gln) through the transamidation of misacylated Glu-tRNA(Gln) in the mitochondria. The reaction takes place in the presence of glutamine and ATP through an activated gamma-phospho-Glu-tRNA(Gln). In Branchiostoma floridae (Florida lancelet), this protein is Glutamyl-tRNA(Gln) amidotransferase subunit C, mitochondrial.